Here is a 357-residue protein sequence, read N- to C-terminus: Peptide chain release factor 1 (357 aa).

Gln234 bears the N5-methylglutamine mark.

This sequence belongs to the prokaryotic/mitochondrial release factor family. Post-translationally, methylated by PrmC. Methylation increases the termination efficiency of RF1.

It is found in the cytoplasm. Peptide chain release factor 1 directs the termination of translation in response to the peptide chain termination codons UAG and UAA. The sequence is that of Peptide chain release factor 1 from Alkaliphilus oremlandii (strain OhILAs) (Clostridium oremlandii (strain OhILAs)).